The following is a 439-amino-acid chain: Acyl-coenzyme A thioesterase 9, mitochondrial (439 aa).

The transit peptide at 1-21 (MRRAALRLCALGKGQLTPGRG) directs the protein to the mitochondrion. HotDog ACOT-type domains lie at 84 to 209 (KDSY…RDSE) and 289 to 401 (ENSK…EKEV). An N6-acetyllysine modification is found at lysine 103.

Belongs to the acyl coenzyme A hydrolase family. As to quaternary structure, interacts with NYAP1, NYAP2 and MYO16.

Its subcellular location is the mitochondrion. It is found in the mitochondrion matrix. The protein resides in the mitochondrion inner membrane. The catalysed reaction is butanoyl-CoA + H2O = butanoate + CoA + H(+). It carries out the reaction propanoyl-CoA + H2O = propanoate + CoA + H(+). It catalyses the reaction hexadecanoyl-CoA + H2O = hexadecanoate + CoA + H(+). The enzyme catalyses octanoyl-CoA + H2O = octanoate + CoA + H(+). The catalysed reaction is decanoyl-CoA + H2O = decanoate + CoA + H(+). It carries out the reaction tetradecanoyl-CoA + H2O = tetradecanoate + CoA + H(+). It catalyses the reaction 4,8-dimethylnonanoyl-CoA + H2O = 4,8-dimethylnonanoate + CoA + H(+). The enzyme catalyses 3-methylbutanoyl-CoA + H2O = 3-methylbutanoate + CoA + H(+). The catalysed reaction is 2-methylpropanoyl-CoA + H2O = 2-methylpropanoate + CoA + H(+). Its pathway is lipid metabolism; fatty acid metabolism. With respect to regulation, strongly inhibited by NADH and CoA. Functionally, mitochondrial acyl-CoA thioesterase. Catalyzes the hydrolysis of acyl-CoAs into free fatty acids and coenzyme A (CoA), regulating their respective intracellular levels. Regulates both mitochondrial lipid and amino acid metabolism. This Homo sapiens (Human) protein is Acyl-coenzyme A thioesterase 9, mitochondrial.